Reading from the N-terminus, the 170-residue chain is Large ribosomal subunit protein uL10 (170 aa).

The protein belongs to the universal ribosomal protein uL10 family. As to quaternary structure, part of the ribosomal stalk of the 50S ribosomal subunit. The N-terminus interacts with L11 and the large rRNA to form the base of the stalk. The C-terminus forms an elongated spine to which L12 dimers bind in a sequential fashion forming a multimeric L10(L12)X complex.

Functionally, forms part of the ribosomal stalk, playing a central role in the interaction of the ribosome with GTP-bound translation factors. This Chlamydia abortus (strain DSM 27085 / S26/3) (Chlamydophila abortus) protein is Large ribosomal subunit protein uL10.